A 172-amino-acid polypeptide reads, in one-letter code: Stellate protein CG33238 (172 aa).

Belongs to the casein kinase 2 subunit beta family. Interacts in vitro with the casein kinase 2 alpha subunit (CkII-alpha). The relevance of such interaction is however unclear in vivo. Probably not expressed in wild-type flies. In males lacking the Y chromosome, it is testis-specific and constitutes the main component of star-shaped crystals.

Functionally, unknown. In males lacking the Y chromosome, its strong overexpression leads to the appearance of proteinaceous star-shaped crystals in the primary spermatocytes causing meiotic drive, possibly by interfering with normal casein kinase 2 activity. This Drosophila melanogaster (Fruit fly) protein is Stellate protein CG33238 (Ste:CG33238).